The primary structure comprises 372 residues: tRNA pseudouridine synthase D (372 aa).

Asp85 acts as the Nucleophile in catalysis. The TRUD domain maps to Gly160 to Gly330.

The protein belongs to the pseudouridine synthase TruD family.

It carries out the reaction uridine(13) in tRNA = pseudouridine(13) in tRNA. Responsible for synthesis of pseudouridine from uracil-13 in transfer RNAs. This is tRNA pseudouridine synthase D from Campylobacter jejuni (strain RM1221).